The sequence spans 295 residues: Probable adenylate kinase 6, chloroplastic (295 aa).

The N-terminal 46 residues, 1–46, are a transit peptide targeting the chloroplast; the sequence is MAVSHRLLRPATTTIKNTFSSLFIRSLSSSSSGSSLDPKIDLEEAA. 74-79 is an ATP binding site; that stretch reads GVGKGT. Positions 94–123 are NMP; sequence ATGDLVREELSSSGLLSSQLKELVNHGKLV. AMP is bound by residues threonine 95, arginine 100, 121-123, 151-154, and glutamine 158; these read KLV and GFPR. The LID stretch occupies residues 187–235; the sequence is GRRICSECGGNYNVACIDIKGDDDTPRMYMPPLLPPPNCESKLISRADD. Arginine 188 serves as a coordination point for ATP. Arginine 243 contributes to the AMP binding site. Glycine 271 lines the ATP pocket.

Belongs to the adenylate kinase family. In terms of assembly, monomer.

The protein localises to the plastid. Its subcellular location is the chloroplast. The enzyme catalyses AMP + ATP = 2 ADP. Functionally, catalyzes the reversible transfer of the terminal phosphate group between ATP and AMP. Plays an important role in cellular energy homeostasis and in adenine nucleotide metabolism. In Arabidopsis thaliana (Mouse-ear cress), this protein is Probable adenylate kinase 6, chloroplastic.